Here is a 109-residue protein sequence, read N- to C-terminus: RNA-binding protein Hfq (109 aa).

The 60-residue stretch at 9 to 68 (DPFLNALRKEKVSVSVYLVNGIKLQGQVEAFDQFCIVLRNTVNQMVYKHAISTIVPAKSV) folds into the Sm domain. Residues 77 to 109 (PYHQNSNDEQDENVDDIHSDDLEIQENEGNIHE) form a disordered region.

Belongs to the Hfq family. Homohexamer.

In terms of biological role, RNA chaperone that binds small regulatory RNA (sRNAs) and mRNAs to facilitate mRNA translational regulation in response to envelope stress, environmental stress and changes in metabolite concentrations. Also binds with high specificity to tRNAs. The sequence is that of RNA-binding protein Hfq from Francisella tularensis subsp. tularensis (strain FSC 198).